The primary structure comprises 321 residues: Methionyl-tRNA formyltransferase (321 aa).

113–116 (SILP) contacts (6S)-5,6,7,8-tetrahydrofolate.

It belongs to the Fmt family.

It carries out the reaction L-methionyl-tRNA(fMet) + (6R)-10-formyltetrahydrofolate = N-formyl-L-methionyl-tRNA(fMet) + (6S)-5,6,7,8-tetrahydrofolate + H(+). Attaches a formyl group to the free amino group of methionyl-tRNA(fMet). The formyl group appears to play a dual role in the initiator identity of N-formylmethionyl-tRNA by promoting its recognition by IF2 and preventing the misappropriation of this tRNA by the elongation apparatus. In Pseudoalteromonas translucida (strain TAC 125), this protein is Methionyl-tRNA formyltransferase.